A 599-amino-acid chain; its full sequence is Sulfite reductase [NADPH] flavoprotein alpha-component (599 aa).

One can recognise a Flavodoxin-like domain in the interval 64 to 202; sequence ITIISASQTG…AASEWRARVV (139 aa). Residues 70 to 75, 117 to 120, and 153 to 162 contribute to the FMN site; these read SQTGNA, STQG, and LGDSSYEFFC. Residues 234 to 448 form the FAD-binding FR-type domain; that stretch reads DAPLAASLSV…IEHNDNFRLP (215 aa). Residues Thr-322, Ala-356, 386–389, 404–406, Tyr-410, and 419–422 contribute to the FAD site; these read RLYS, TVG, and GGAS. Residues 519 to 520, 525 to 529, and Asp-561 each bind NADP(+); these read SR and KIYVQ. Tyr-599 contacts FAD.

It belongs to the NADPH-dependent sulphite reductase flavoprotein subunit CysJ family. This sequence in the N-terminal section; belongs to the flavodoxin family. In the C-terminal section; belongs to the flavoprotein pyridine nucleotide cytochrome reductase family. As to quaternary structure, alpha(8)-beta(8). The alpha component is a flavoprotein, the beta component is a hemoprotein. FAD serves as cofactor. FMN is required as a cofactor.

The enzyme catalyses hydrogen sulfide + 3 NADP(+) + 3 H2O = sulfite + 3 NADPH + 4 H(+). It participates in sulfur metabolism; hydrogen sulfide biosynthesis; hydrogen sulfide from sulfite (NADPH route): step 1/1. Its function is as follows. Component of the sulfite reductase complex that catalyzes the 6-electron reduction of sulfite to sulfide. This is one of several activities required for the biosynthesis of L-cysteine from sulfate. The flavoprotein component catalyzes the electron flow from NADPH -&gt; FAD -&gt; FMN to the hemoprotein component. In Escherichia coli O6:H1 (strain CFT073 / ATCC 700928 / UPEC), this protein is Sulfite reductase [NADPH] flavoprotein alpha-component.